A 118-amino-acid chain; its full sequence is T cell receptor gamma variable 4 (118 aa).

The signal sequence occupies residues 1–17 (MQWALAVLLAFLSPASQ). The region spanning 18–118 (KSSNLEGRTK…GVYYCATWDG (101 aa)) is the Ig-like domain. Cys41 and Cys113 are oxidised to a cystine. Asn106 carries N-linked (GlcNAc...) asparagine glycosylation.

As to quaternary structure, gamma-delta TR is a heterodimer composed of a gamma and delta chain; disulfide-linked. The gamma-delta TR is associated with the transmembrane signaling CD3 coreceptor proteins following the stoichiometry: a single gamma-delta TR heterodimer associates with one CD3D-CD3E heterodimer, one CD3G-CD3E heterodimer and one CD247 homodimer forming a stable octameric structure. Upon activation, gamma-delta TR complex associates with FCER1G to initiate intracellular signaling.

The protein resides in the cell membrane. Its function is as follows. V region of the variable domain of T cell receptor (TR) gamma chain that participates in the antigen recognition. Gamma-delta TRs recognize a variety of self and foreign non-peptide antigens frequently expressed at the epithelial boundaries between the host and external environment, including endogenous lipids presented by MH-like protein CD1D and phosphoantigens presented by butyrophilin-like molecule BTN3A1. Upon antigen recognition induces rapid, innate-like immune responses involved in pathogen clearance and tissue repair. Binding of gamma-delta TR complex to antigen triggers phosphorylation of immunoreceptor tyrosine-based activation motifs (ITAMs) in the CD3 chains by the LCK and FYN kinases, allowing the recruitment, phosphorylation, and activation of ZAP70 that facilitates phosphorylation of the scaffolding proteins LCP2 and LAT. This lead to the formation of a supramolecular signalosome that recruits the phospholipase PLCG1, resulting in calcium mobilization and ERK activation, ultimately leading to T cell expansion and differentiation into effector cells. Gamma-delta TRs are produced through somatic rearrangement of a limited repertoire of variable (V), diversity (D), and joining (J) genes. The potential diversity of gamma-delta TRs is conferred by the unique ability to rearrange (D) genes in tandem and to utilize all three reading frames. The combinatorial diversity is considerably increased by the sequence exonuclease trimming and random nucleotide (N) region additions which occur during the V-(D)-J rearrangements. The sequence is that of T cell receptor gamma variable 4 from Homo sapiens (Human).